Consider the following 305-residue polypeptide: UDP-3-O-acyl-N-acetylglucosamine deacetylase (305 aa).

Zn(2+)-binding residues include H77, H234, and D238. H261 functions as the Proton donor in the catalytic mechanism.

It belongs to the LpxC family. Zn(2+) serves as cofactor.

The catalysed reaction is a UDP-3-O-[(3R)-3-hydroxyacyl]-N-acetyl-alpha-D-glucosamine + H2O = a UDP-3-O-[(3R)-3-hydroxyacyl]-alpha-D-glucosamine + acetate. Its pathway is glycolipid biosynthesis; lipid IV(A) biosynthesis; lipid IV(A) from (3R)-3-hydroxytetradecanoyl-[acyl-carrier-protein] and UDP-N-acetyl-alpha-D-glucosamine: step 2/6. In terms of biological role, catalyzes the hydrolysis of UDP-3-O-myristoyl-N-acetylglucosamine to form UDP-3-O-myristoylglucosamine and acetate, the committed step in lipid A biosynthesis. This Oleidesulfovibrio alaskensis (strain ATCC BAA-1058 / DSM 17464 / G20) (Desulfovibrio alaskensis) protein is UDP-3-O-acyl-N-acetylglucosamine deacetylase.